An 88-amino-acid polypeptide reads, in one-letter code: Small ribosomal subunit protein uS15 (88 aa).

Belongs to the universal ribosomal protein uS15 family. As to quaternary structure, part of the 30S ribosomal subunit. Forms a bridge to the 50S subunit in the 70S ribosome, contacting the 23S rRNA.

In terms of biological role, one of the primary rRNA binding proteins, it binds directly to 16S rRNA where it helps nucleate assembly of the platform of the 30S subunit by binding and bridging several RNA helices of the 16S rRNA. Functionally, forms an intersubunit bridge (bridge B4) with the 23S rRNA of the 50S subunit in the ribosome. The protein is Small ribosomal subunit protein uS15 of Psychrobacter cryohalolentis (strain ATCC BAA-1226 / DSM 17306 / VKM B-2378 / K5).